An 81-amino-acid polypeptide reads, in one-letter code: Small ribosomal subunit protein bS16 (81 aa).

The protein belongs to the bacterial ribosomal protein bS16 family.

The chain is Small ribosomal subunit protein bS16 from Clostridium acetobutylicum (strain ATCC 824 / DSM 792 / JCM 1419 / IAM 19013 / LMG 5710 / NBRC 13948 / NRRL B-527 / VKM B-1787 / 2291 / W).